Reading from the N-terminus, the 636-residue chain is Methyl-CpG-binding domain protein 1 (636 aa).

Residues 1 to 69 (MAESWQDCPA…TLFDFRQGTL (69 aa)) form the MBD domain. Positions 75–113 (KTHPLAVPSKKKKKPSKPAKTKKQQVGLQRSEVRIETPQ) are disordered. Over residues 83-97 (SKKKKKPSKPAKTKK) the composition is skewed to basic residues. A Nuclear localization signal motif is present at residues 84–88 (KKKKK). Lys-117 participates in a covalent cross-link: Glycyl lysine isopeptide (Lys-Gly) (interchain with G-Cter in SUMO2). 2 consecutive CXXC-type zinc fingers follow at residues 187-234 (RMFK…RRCL) and 235-281 (RIME…RRCF). Zn(2+)-binding residues include Cys-194, Cys-197, Cys-200, Cys-206, Cys-209, Cys-212, Cys-228, Cys-233, Cys-243, Cys-246, Cys-249, Cys-255, Cys-258, Cys-261, Cys-275, and Cys-280. Residues 291–314 (GSKVASQRHSQAPPLPPHPASQYT) form a disordered region. Lys-293 is covalently cross-linked (Glycyl lysine isopeptide (Lys-Gly) (interchain with G-Cter in SUMO2)). The segment at 348–396 (TNQRQNRKCGACAACLRRMDCGRCDFCCDKPKFGGGNQKRQKCRWRQCL) adopts a CXXC-type 3 zinc-finger fold. Positions 356, 359, 362, 368, 371, 374, 390, and 395 each coordinate Zn(2+). A disordered region spans residues 407–474 (AGSGSGEGAG…GRGSVLPQPD (68 aa)). Residue Ser-409 is modified to Phosphoserine. Residues Lys-443 and Lys-461 each participate in a glycyl lysine isopeptide (Lys-Gly) (interchain with G-Cter in SUMO2) cross-link. Residues Lys-520 and Lys-559 each participate in a glycyl lysine isopeptide (Lys-Gly) (interchain with G-Cter in SUMO2); alternate cross-link. The segment at 543 to 589 (QSGFPSKAADPDLSPVKQEPPGPEEDGEEKKDDVSETTPAEEIGGVG) is disordered. The segment at 550–612 (AADPDLSPVK…RLRDAEAWLP (63 aa)) is transcriptional repression domain (TRD).

Interacts with OASL, ATF7IP, ATF7IP2 and BAHD1. Binds CHAF1A and the SUV39H1-CBX5 complex via the MBD domain. Binds MGP via the TRD domain. May be part of the MeCP1 complex. During DNA replication, it recruits SETDB1 to form a S phase-specific complex that facilitates methylation of H3 'Lys-9' during replication-coupled chromatin assembly and is at least composed of the CAF-1 subunit CHAF1A, MBD1 and SETDB1. In terms of assembly, interacts with the Ten-1 ICD form of TENM1. In terms of processing, sumoylated, sumoylation may increase interaction with ATF7IP. As to expression, highly expressed in kidney, liver and brain. Detected at lower levels in heart, lung, skeletal muscle, spleen and testis.

It localises to the nucleus. Its subcellular location is the nucleus matrix. The protein localises to the nucleus speckle. The protein resides in the chromosome. Transcriptional repressor that binds CpG islands in promoters where the DNA is methylated at position 5 of cytosine within CpG dinucleotides. Binding is abolished by the presence of 7-mG that is produced by DNA damage by methylmethanesulfonate (MMS). Acts as transcriptional repressor and plays a role in gene silencing by recruiting ATF7IP, which in turn recruits factors such as the histone methyltransferase SETDB1. Probably forms a complex with SETDB1 and ATF7IP that represses transcription and couples DNA methylation and histone 'Lys-9' trimethylation. Isoform 1 can also repress transcription from unmethylated promoters. The polypeptide is Methyl-CpG-binding domain protein 1 (Mus musculus (Mouse)).